The following is a 613-amino-acid chain: tRNA (uracil-5-)-methyltransferase homolog A (613 aa).

Residues 1 to 46 are disordered; that stretch reads MSEPAAEVPEPMEDCGQDASAVPSSAAPLCQKEEAGPGPAAGPGTQ. In terms of domain architecture, RRM spans 63-136; sequence FKLELQNVPR…CPLSVRLARP (74 aa). A coiled-coil region spans residues 170-200; sequence YTEQLEQKRLECERVLQKLAKEIGNTNRALL. A Phosphoserine modification is found at serine 368. Glutamine 401, glutamate 451, and aspartate 500 together coordinate S-adenosyl-L-methionine. The active-site Nucleophile is the cysteine 528. Glutamate 571 (proton acceptor) is an active-site residue.

Belongs to the class I-like SAM-binding methyltransferase superfamily. RNA M5U methyltransferase family. In terms of tissue distribution, widely expressed at low level. Expressed at higher level in proliferating cells.

The protein localises to the cytoplasm. The protein resides in the cytosol. The enzyme catalyses uridine(54) in tRNA + S-adenosyl-L-methionine = 5-methyluridine(54) in tRNA + S-adenosyl-L-homocysteine + H(+). It carries out the reaction a uridine in mRNA + S-adenosyl-L-methionine = a 5-methyluridine in mRNA + S-adenosyl-L-homocysteine + H(+). Its function is as follows. S-adenosyl-L-methionine-dependent methyltransferase that catalyzes the formation of 5-methyl-uridine in tRNAs and some mRNAs. Mainly catalyzes the methylation of uridine at position 54 (m5U54) in cytosolic tRNAs. Also able to mediate the formation of 5-methyl-uridine in some mRNAs. The protein is tRNA (uracil-5-)-methyltransferase homolog A of Mus musculus (Mouse).